The chain runs to 23 residues: Caerin-4.1 (23 aa).

Expressed by the skin parotoid and/or rostral glands.

Its subcellular location is the secreted. Its function is as follows. Antibacterial peptide, that adopts an alpha helical conformation which can disrupt bacterial membranes. Each caerin displays a different antimicrobial specificity. This chain is Caerin-4.1, found in Ranoidea caerulea (Green tree frog).